The primary structure comprises 277 residues: 2-dehydro-3-deoxyphosphooctonate aldolase (277 aa).

Belongs to the KdsA family.

It localises to the cytoplasm. It catalyses the reaction D-arabinose 5-phosphate + phosphoenolpyruvate + H2O = 3-deoxy-alpha-D-manno-2-octulosonate-8-phosphate + phosphate. It participates in carbohydrate biosynthesis; 3-deoxy-D-manno-octulosonate biosynthesis; 3-deoxy-D-manno-octulosonate from D-ribulose 5-phosphate: step 2/3. It functions in the pathway bacterial outer membrane biogenesis; lipopolysaccharide biosynthesis. The protein is 2-dehydro-3-deoxyphosphooctonate aldolase of Brucella melitensis biotype 2 (strain ATCC 23457).